We begin with the raw amino-acid sequence, 228 residues long: Casparian strip membrane protein 2 (228 aa).

Residues 1 to 65 (MSTSDAAATV…FRRADRGSRC (65 aa)) lie on the Cytoplasmic side of the membrane. The helical transmembrane segment at 66–86 (VALLDLVLRVAAFGPALAAAI) threads the bilayer. The Extracellular portion of the chain corresponds to 87–113 (ATGTSDETLSVFTQFFQFHARFDDFPA). The helical transmembrane segment at 114–134 (LLFFMVANAIAAGYLVLSLPF) threads the bilayer. At 135-149 (SAVVVLRPQAIGLRH) the chain is on the cytoplasmic side. The chain crosses the membrane as a helical span at residues 150–170 (LLLICDLIIAALLTAAAAAAA). Topologically, residues 171 to 201 (AIVDLAHSGNQRANWVPICMQFHGFCQRTSG) are extracellular. A helical membrane pass occupies residues 202–222 (AVVASFLAVLVLLFLVILAAF). The Cytoplasmic segment spans residues 223-228 (TIRKRC).

It belongs to the Casparian strip membrane proteins (CASP) family. In terms of assembly, homodimer and heterodimers.

Its subcellular location is the cell membrane. Its function is as follows. Regulates membrane-cell wall junctions and localized cell wall deposition. Required for establishment of the Casparian strip membrane domain (CSD) and the subsequent formation of Casparian strips, a cell wall modification of the root endodermis that determines an apoplastic barrier between the intraorganismal apoplasm and the extraorganismal apoplasm and prevents lateral diffusion. This Zea mays (Maize) protein is Casparian strip membrane protein 2.